An 841-amino-acid chain; its full sequence is Potassium transport protein 1 (841 aa).

The next 2 membrane-spanning stretches (helical) occupy residues 24–44 and 80–100; these read YIYIISLTIIASILLFTGGTT and ILYGFTAITVPIWMHGSISFI. Residues Asn-116 and Asn-164 are each glycosylated (N-linked (GlcNAc...) asparagine). The disordered stretch occupies residues 173–192; it reads STNNPYFPDNPPSPKADISK. Asn-215 and Asn-401 each carry an N-linked (GlcNAc...) asparagine glycan. 7 helical membrane passes run 469–489, 507–527, 537–557, 600–620, 662–682, 715–735, and 747–767; these read MVTLYFIIFNIAAFVTFIVFA, GWWALFSSASSFNDLGFSLIP, IFLLLISSLFIIAGNTGFPCF, WVLFFVLLLLNVIDLVLFMVL, AVLVSYMVMMYISVYPVAINM, LSYDLWYIFLGLFIICICEGG, and IFTVLFEVVSAYGTVGLSTGL. Asn-771 carries an N-linked (GlcNAc...) asparagine glycan.

Belongs to the TrkH potassium transport family.

Its subcellular location is the cell membrane. Together with TRK2, defines the major, high-affinity potassium influx transport system. Involved in maintenance of the proper sodium/potassium ratio in the cell and in regulating the plasma membrane potential. The polypeptide is Potassium transport protein 1 (trk1) (Schizosaccharomyces pombe (strain 972 / ATCC 24843) (Fission yeast)).